The primary structure comprises 315 residues: tRNA dimethylallyltransferase (315 aa).

11–18 (GPTASGKS) provides a ligand contact to ATP. 13–18 (TASGKS) lines the substrate pocket. Interaction with substrate tRNA regions lie at residues 36–39 (DSMQ) and 160–164 (QRLIR).

Belongs to the IPP transferase family. Monomer. Mg(2+) is required as a cofactor.

The catalysed reaction is adenosine(37) in tRNA + dimethylallyl diphosphate = N(6)-dimethylallyladenosine(37) in tRNA + diphosphate. Catalyzes the transfer of a dimethylallyl group onto the adenine at position 37 in tRNAs that read codons beginning with uridine, leading to the formation of N6-(dimethylallyl)adenosine (i(6)A). The chain is tRNA dimethylallyltransferase from Rickettsia bellii (strain RML369-C).